Consider the following 133-residue polypeptide: Small ribosomal subunit protein uS8 (133 aa).

This sequence belongs to the universal ribosomal protein uS8 family. Part of the 30S ribosomal subunit. Contacts proteins S5 and S12.

Its function is as follows. One of the primary rRNA binding proteins, it binds directly to 16S rRNA central domain where it helps coordinate assembly of the platform of the 30S subunit. This Prochlorococcus marinus (strain MIT 9313) protein is Small ribosomal subunit protein uS8.